A 375-amino-acid polypeptide reads, in one-letter code: uncharacterized protein (375 aa).

One can recognise a Radical SAM core domain in the interval 78–302 (KKIEITSTIH…IFPNIRITSP (225 aa)). Residues C92, C98, and C101 each contribute to the [4Fe-4S] cluster site.

Requires [4Fe-4S] cluster as cofactor.

This is an uncharacterized protein from Methanocaldococcus jannaschii (strain ATCC 43067 / DSM 2661 / JAL-1 / JCM 10045 / NBRC 100440) (Methanococcus jannaschii).